The chain runs to 377 residues: Probable O-methyltransferase 3 (377 aa).

Asp241 is a binding site for S-adenosyl-L-methionine. The active-site Proton acceptor is the His279.

This sequence belongs to the class I-like SAM-binding methyltransferase superfamily. Cation-independent O-methyltransferase family. In terms of tissue distribution, highly expressed in lupulin glands. Detected in early-, mid- and late-stage cones.

In Humulus lupulus (European hop), this protein is Probable O-methyltransferase 3.